We begin with the raw amino-acid sequence, 1201 residues long: Vitamin B12-dependent ribonucleotide reductase (1201 aa).

Residues Ser-153, 198–199 (AC), Gly-230, 482–486 (NPCSE), and 683–687 (PTGTI) contribute to the substrate site. Cysteines 199 and 495 form a disulfide. The Proton acceptor role is filled by Asn-482. Residue Cys-484 is the Cysteine radical intermediate of the active site. Residue Glu-486 is the Proton acceptor of the active site. The segment covering 1100-1118 (DEIGSKRATAESNGQEKET) has biased composition (basic and acidic residues). Residues 1100–1120 (DEIGSKRATAESNGQEKETLS) are disordered.

This sequence belongs to the ribonucleoside diphosphate reductase class-2 family. Requires adenosylcob(III)alamin as cofactor.

It catalyses the reaction a 2'-deoxyribonucleoside 5'-diphosphate + [thioredoxin]-disulfide + H2O = a ribonucleoside 5'-diphosphate + [thioredoxin]-dithiol. Functionally, catalyzes the reduction of ribonucleotides to deoxyribonucleotides. May function to provide a pool of deoxyribonucleotide precursors for DNA repair during oxygen limitation and/or for immediate growth after restoration of oxygen. This Leptospira interrogans serogroup Icterohaemorrhagiae serovar copenhageni (strain Fiocruz L1-130) protein is Vitamin B12-dependent ribonucleotide reductase (nrdJ).